We begin with the raw amino-acid sequence, 124 residues long: Nucleoid-associated protein Noca_0318 (124 aa).

The protein belongs to the YbaB/EbfC family. Homodimer.

It is found in the cytoplasm. The protein localises to the nucleoid. Functionally, binds to DNA and alters its conformation. May be involved in regulation of gene expression, nucleoid organization and DNA protection. The polypeptide is Nucleoid-associated protein Noca_0318 (Nocardioides sp. (strain ATCC BAA-499 / JS614)).